The following is a 137-amino-acid chain: Gonadotropin subunit beta-1 (137 aa).

The signal sequence occupies residues 1–24; that stretch reads MYCTHLRMLQLVVMATLWVTPVRA. Cystine bridges form between C32–C78, C46–C93, C55–C108, C59–C110, and C113–C120. N36 carries an N-linked (GlcNAc...) asparagine glycan.

It belongs to the glycoprotein hormones subunit beta family. In terms of assembly, heterodimer of an alpha and a beta chain.

Its subcellular location is the secreted. Involved in gametogenesis and steroidogenesis. In Coregonus autumnalis (Arctic cisco), this protein is Gonadotropin subunit beta-1 (cgba).